The sequence spans 341 residues: Basic membrane protein D (341 aa).

An N-terminal signal peptide occupies residues 1–16 (MLKKVYYFLIFLFIVA). Cys17 carries N-palmitoyl cysteine lipidation. Cys17 carries the S-diacylglycerol cysteine lipid modification.

Belongs to the BMP lipoprotein family. As to quaternary structure, monomer.

The protein resides in the cell inner membrane. Binds adenosine and inosine. May be part of an ABC-type nucleoside uptake system involved in the purine salvage pathway. This is Basic membrane protein D from Borreliella burgdorferi (strain JD1) (Borrelia burgdorferi).